We begin with the raw amino-acid sequence, 374 residues long: Anhydro-N-acetylmuramic acid kinase (374 aa).

12-19 (GTSLDGID) serves as a coordination point for ATP.

Belongs to the anhydro-N-acetylmuramic acid kinase family.

It carries out the reaction 1,6-anhydro-N-acetyl-beta-muramate + ATP + H2O = N-acetyl-D-muramate 6-phosphate + ADP + H(+). Its pathway is amino-sugar metabolism; 1,6-anhydro-N-acetylmuramate degradation. It functions in the pathway cell wall biogenesis; peptidoglycan recycling. Catalyzes the specific phosphorylation of 1,6-anhydro-N-acetylmuramic acid (anhMurNAc) with the simultaneous cleavage of the 1,6-anhydro ring, generating MurNAc-6-P. Is required for the utilization of anhMurNAc either imported from the medium or derived from its own cell wall murein, and thus plays a role in cell wall recycling. The chain is Anhydro-N-acetylmuramic acid kinase from Klebsiella pneumoniae subsp. pneumoniae (strain ATCC 700721 / MGH 78578).